A 397-amino-acid polypeptide reads, in one-letter code: S-adenosylmethionine synthase (397 aa).

ATP is bound at residue H17. Residue D19 participates in Mg(2+) binding. E45 is a K(+) binding site. 2 residues coordinate L-methionine: E58 and Q101. The flexible loop stretch occupies residues 101–111 (QSPDIAQGVDK). ATP-binding positions include 176–178 (DGK), 243–244 (RF), D252, 258–259 (RK), and K279. Residue D252 participates in L-methionine binding. K283 lines the L-methionine pocket.

It belongs to the AdoMet synthase family. In terms of assembly, homotetramer; dimer of dimers. It depends on Mg(2+) as a cofactor. K(+) serves as cofactor.

Its subcellular location is the cytoplasm. The catalysed reaction is L-methionine + ATP + H2O = S-adenosyl-L-methionine + phosphate + diphosphate. The protein operates within amino-acid biosynthesis; S-adenosyl-L-methionine biosynthesis; S-adenosyl-L-methionine from L-methionine: step 1/1. In terms of biological role, catalyzes the formation of S-adenosylmethionine (AdoMet) from methionine and ATP. The overall synthetic reaction is composed of two sequential steps, AdoMet formation and the subsequent tripolyphosphate hydrolysis which occurs prior to release of AdoMet from the enzyme. The protein is S-adenosylmethionine synthase of Staphylococcus aureus (strain USA300).